The primary structure comprises 111 residues: Phosphoribosyl-ATP pyrophosphatase (111 aa).

The protein belongs to the PRA-PH family.

The protein localises to the cytoplasm. The catalysed reaction is 1-(5-phospho-beta-D-ribosyl)-ATP + H2O = 1-(5-phospho-beta-D-ribosyl)-5'-AMP + diphosphate + H(+). It participates in amino-acid biosynthesis; L-histidine biosynthesis; L-histidine from 5-phospho-alpha-D-ribose 1-diphosphate: step 2/9. The chain is Phosphoribosyl-ATP pyrophosphatase (hisE) from Azospirillum brasilense.